The chain runs to 279 residues: MEKNCGSGQNKLKALRMHIYFEVDFQEQAQHYQAVLYSRGVTVDLQPIEKLNARFLRLNPDLALCVDENGLWLSANGMKMQPDWKAEIPRLKRASLKSEMIARACQLGEKPVLVDATAGLGHDSLLMAYLGAQIQLVERHPILFTLLEDSKAQAQRDPFLSQFMDRIQLLFADSASYLQQLDQEAKTVDVVYLDPMFPQRDQNQQAIKKQAQVKKQMQLLHLLLPEDGEMDLGDHLLELAKKVVKRVIVKRPRHAIFLANQEPAHQWQGDACRFDAYFQ.

S-adenosyl-L-methionine-binding positions include 138–139 (ER) and aspartate 194.

The protein belongs to the methyltransferase superfamily. RsmJ family.

The protein resides in the cytoplasm. The enzyme catalyses guanosine(1516) in 16S rRNA + S-adenosyl-L-methionine = N(2)-methylguanosine(1516) in 16S rRNA + S-adenosyl-L-homocysteine + H(+). Its function is as follows. Specifically methylates the guanosine in position 1516 of 16S rRNA. The polypeptide is Ribosomal RNA small subunit methyltransferase J (Acinetobacter baumannii (strain ACICU)).